The following is a 752-amino-acid chain: MCEPSGSDDAMVHASEMVDGDEMIHGNEMVVHDSVMIDGNEMVQENVMVHGSGEMVQGSEMVHNNEIIQVNDMIQVNEMVNGDKMAHGHELVGVELTTPTASRRRRKKSVVWEHFTIEEMPGGVSRASCNLCKQTFAYSCGSKISGTSHLKRHITLASCPMLKNEDMKLSLPLATVTNNDGEGCAERVAKRHYRSTGYANAMFDQDRTCSNLAKMIILHDYPLHIVEQRGFTAFIGSLQPRFRVIDVDTIEGQVHSVYQKERENLMHVFSTVPGRISLTVRLWATSQTLGYISLAAQFIDTEWRVHRRMVNFMMVSSPHSENSLSEAISTSLSDWNMKDKLFTITLDNDPSSHDIYSANMINYLSNKKDNIMIKGQLFVVRCYAHILNTVAQDVIASVHSVIYHIRESIKFIKASSVHEDKFAEIALQLEIPSAKTLCLDVTTQWNTTYLMLLAALDYQQVFASLETCDGDYNEAPSTEDWKKVEAACSYLSLLYDSAHNIMAAPNPTSNIFFHEAWKLQSELSNAIAHEDPIFRSTAKIMHERFDKYWKDCNLVLAIAVVMDPRFKMKLVEFSYSKIHSVEAAKYVKVVDDAIHELYSEYATQGEANRDAHVTDNSAAVTPPNGDELLDFDIYLSEIATSQPSISELEQYLEEALMPRIQDFEILEWWKLNTIKFPTLSKMARDVLAIPMSMVSSGSSIFSATATGSQMLDDYRSSLRPETVEALFCAKDWLQYPPATTEAPSTALVKMEN.

The BED-type zinc finger occupies 106 to 166; that stretch reads RKKSVVWEHF…ASCPMLKNED (61 aa). Residues cysteine 129, cysteine 132, histidine 153, and cysteine 159 each contribute to the Zn(2+) site. Residues 647 to 733 form an HATC (Hobo-Ac-Tam3) domain region; it reads ELEQYLEEAL…EALFCAKDWL (87 aa).

In terms of assembly, homodimer.

The protein localises to the nucleus. Functionally, transposase-like protein that is essential for plant growth and development. May regulate global gene expression by recruiting other cellular factors. This is Zinc finger BED domain-containing protein RICESLEEPER 3 from Oryza sativa subsp. japonica (Rice).